The primary structure comprises 139 residues: Large-conductance mechanosensitive channel (139 aa).

3 helical membrane passes run 10-30, 40-60, and 80-100; these read FAVK…AAFG, VIMP…YYIA, and LAYG…FIIF.

The protein belongs to the MscL family. Homopentamer.

The protein resides in the cell inner membrane. Channel that opens in response to stretch forces in the membrane lipid bilayer. May participate in the regulation of osmotic pressure changes within the cell. This chain is Large-conductance mechanosensitive channel, found in Janthinobacterium sp. (strain Marseille) (Minibacterium massiliensis).